A 247-amino-acid chain; its full sequence is Probable transcriptional regulatory protein LPC_0711 (247 aa).

The protein belongs to the TACO1 family.

Its subcellular location is the cytoplasm. This chain is Probable transcriptional regulatory protein LPC_0711, found in Legionella pneumophila (strain Corby).